Consider the following 211-residue polypeptide: Urease accessory protein UreF (211 aa).

The segment at 71–93 (DDADRETDARTPAPAARHASRSQ) is disordered.

Belongs to the UreF family. UreD, UreF and UreG form a complex that acts as a GTP-hydrolysis-dependent molecular chaperone, activating the urease apoprotein by helping to assemble the nickel containing metallocenter of UreC. The UreE protein probably delivers the nickel.

The protein resides in the cytoplasm. In terms of biological role, required for maturation of urease via the functional incorporation of the urease nickel metallocenter. In Mycobacterium bovis (strain ATCC BAA-935 / AF2122/97), this protein is Urease accessory protein UreF.